A 243-amino-acid chain; its full sequence is UDP-2,3-diacylglucosamine hydrolase (243 aa).

Residues aspartate 9, histidine 11, aspartate 42, asparagine 79, and histidine 114 each contribute to the Mn(2+) site. Substrate is bound at residue 79-80 (NR). 4 residues coordinate substrate: aspartate 122, serine 160, asparagine 164, and histidine 195. Histidine 195 and histidine 197 together coordinate Mn(2+).

Belongs to the LpxH family. Mn(2+) is required as a cofactor.

Its subcellular location is the cell inner membrane. It catalyses the reaction UDP-2-N,3-O-bis[(3R)-3-hydroxytetradecanoyl]-alpha-D-glucosamine + H2O = 2-N,3-O-bis[(3R)-3-hydroxytetradecanoyl]-alpha-D-glucosaminyl 1-phosphate + UMP + 2 H(+). Its pathway is glycolipid biosynthesis; lipid IV(A) biosynthesis; lipid IV(A) from (3R)-3-hydroxytetradecanoyl-[acyl-carrier-protein] and UDP-N-acetyl-alpha-D-glucosamine: step 4/6. Hydrolyzes the pyrophosphate bond of UDP-2,3-diacylglucosamine to yield 2,3-diacylglucosamine 1-phosphate (lipid X) and UMP by catalyzing the attack of water at the alpha-P atom. Involved in the biosynthesis of lipid A, a phosphorylated glycolipid that anchors the lipopolysaccharide to the outer membrane of the cell. The sequence is that of UDP-2,3-diacylglucosamine hydrolase from Coxiella burnetii (strain RSA 331 / Henzerling II).